A 1044-amino-acid chain; its full sequence is Probable translation initiation factor IF-2 (1044 aa).

Residues 173-265 (FAGTIFGREN…LSLILLRLGI (93 aa)) form the DOD-type homing endonuclease domain. The 218-residue stretch at 451-668 (TTETHNFIAN…LIAGLSQKYL (218 aa)) folds into the tr-type G domain. GTP contacts are provided by residues 524 to 528 (DTPGH) and 578 to 581 (NKID).

It belongs to the TRAFAC class translation factor GTPase superfamily. Classic translation factor GTPase family. IF-2 subfamily. Post-translationally, this protein undergoes a protein self splicing that involves a post-translational excision of the intervening region (intein) followed by peptide ligation.

In terms of biological role, function in general translation initiation by promoting the binding of the formylmethionine-tRNA to ribosomes. Seems to function along with eIF-2. The sequence is that of Probable translation initiation factor IF-2 (infB) from Pyrococcus horikoshii (strain ATCC 700860 / DSM 12428 / JCM 9974 / NBRC 100139 / OT-3).